Consider the following 162-residue polypeptide: Larval cuticle protein F1 (162 aa).

4 consecutive repeat copies span residues 27-30, 43-46, 59-62, and 75-78.

In terms of biological role, component of the larval cuticle. The chain is Larval cuticle protein F1 from Tenebrio molitor (Yellow mealworm beetle).